The primary structure comprises 421 residues: Alpha-1-antitrypsin-related protein (421 aa).

An N-terminal signal peptide occupies residues 1-21 (MPFSVSWGILLLAGLCCLVPS). Residues Asn56, Asn110, Asn148, and Asn274 are each glycosylated (N-linked (GlcNAc...) asparagine).

It belongs to the serpin family. As to quaternary structure, interacts with CANX and PDIA3. Glycosylated. In terms of tissue distribution, expressed in the liver, leukocytes and testis. Also detected in brain, colon, uterus, esophagus, spleen, trachea, kidney and lung.

Its subcellular location is the endoplasmic reticulum. Its function is as follows. Putative serine protease inhibitor. This Homo sapiens (Human) protein is Alpha-1-antitrypsin-related protein (SERPINA2).